The primary structure comprises 554 residues: CTP synthase (554 aa).

The amidoligase domain stretch occupies residues 1–265 (MTPLIFVTGG…DEIVVNQLKL (265 aa)). Ser-13 serves as a coordination point for CTP. Residue Ser-13 coordinates UTP. 14-19 (SLGKGI) is an ATP binding site. The Mg(2+) site is built by Asp-71 and Glu-139. Residues 146 to 148 (DIE), 186 to 191 (KTKPTQ), and Lys-222 each bind CTP. Residues 186–191 (KTKPTQ) and Lys-222 each bind UTP. Positions 292 to 545 (TIAVVGKYVD…IRAARERKAG (254 aa)) constitute a Glutamine amidotransferase type-1 domain. Gly-353 contacts L-glutamine. The Nucleophile; for glutamine hydrolysis role is filled by Cys-380. L-glutamine is bound by residues 381-384 (YGMQ), Glu-404, and Arg-471. Residues His-518 and Glu-520 contribute to the active site.

It belongs to the CTP synthase family. In terms of assembly, homotetramer.

It carries out the reaction UTP + L-glutamine + ATP + H2O = CTP + L-glutamate + ADP + phosphate + 2 H(+). The catalysed reaction is L-glutamine + H2O = L-glutamate + NH4(+). The enzyme catalyses UTP + NH4(+) + ATP = CTP + ADP + phosphate + 2 H(+). Its pathway is pyrimidine metabolism; CTP biosynthesis via de novo pathway; CTP from UDP: step 2/2. Its activity is regulated as follows. Allosterically activated by GTP, when glutamine is the substrate; GTP has no effect on the reaction when ammonia is the substrate. The allosteric effector GTP functions by stabilizing the protein conformation that binds the tetrahedral intermediate(s) formed during glutamine hydrolysis. Inhibited by the product CTP, via allosteric rather than competitive inhibition. Catalyzes the ATP-dependent amination of UTP to CTP with either L-glutamine or ammonia as the source of nitrogen. Regulates intracellular CTP levels through interactions with the four ribonucleotide triphosphates. The chain is CTP synthase from Stenotrophomonas maltophilia (strain K279a).